The sequence spans 84 residues: Exodeoxyribonuclease 7 small subunit (84 aa).

The protein belongs to the XseB family. In terms of assembly, heterooligomer composed of large and small subunits.

The protein resides in the cytoplasm. The enzyme catalyses Exonucleolytic cleavage in either 5'- to 3'- or 3'- to 5'-direction to yield nucleoside 5'-phosphates.. Bidirectionally degrades single-stranded DNA into large acid-insoluble oligonucleotides, which are then degraded further into small acid-soluble oligonucleotides. In Bartonella henselae (strain ATCC 49882 / DSM 28221 / CCUG 30454 / Houston 1) (Rochalimaea henselae), this protein is Exodeoxyribonuclease 7 small subunit.